A 383-amino-acid polypeptide reads, in one-letter code: Probable cell wall hydrolase LytN (383 aa).

The signal sequence occupies residues 1–49 (MFIYYCKECSIMNKQQSKVRYSIRKVSIGILSISIGMFLALGMSNKAYA). Residues 175–219 (QIYTVKKGDTLSAIALKYKTTVSNIQNTNNIANPNLIFIGQKLKV) enclose the LysM domain. The Peptidase C51 domain occupies 241-378 (NSSTLNYLKT…NYENDMIFIR (138 aa)).

The protein resides in the secreted. Functionally, probably involved in peptidoglycan hydrolysis. The protein is Probable cell wall hydrolase LytN (lytN) of Staphylococcus aureus (strain Mu50 / ATCC 700699).